The sequence spans 414 residues: uncharacterized protein (414 aa).

3 disordered regions span residues 136 to 168 (SSKS…TVPT), 298 to 322 (KNFP…SYHR), and 350 to 382 (PPHS…MSTS).

This is an uncharacterized protein from Macaca fascicularis (Crab-eating macaque).